A 120-amino-acid polypeptide reads, in one-letter code: Large ribosomal subunit protein uL22 (120 aa).

This sequence belongs to the universal ribosomal protein uL22 family. As to quaternary structure, part of the 50S ribosomal subunit.

Its function is as follows. This protein binds specifically to 23S rRNA; its binding is stimulated by other ribosomal proteins, e.g. L4, L17, and L20. It is important during the early stages of 50S assembly. It makes multiple contacts with different domains of the 23S rRNA in the assembled 50S subunit and ribosome. In terms of biological role, the globular domain of the protein is located near the polypeptide exit tunnel on the outside of the subunit, while an extended beta-hairpin is found that lines the wall of the exit tunnel in the center of the 70S ribosome. The polypeptide is Large ribosomal subunit protein uL22 (Corynebacterium kroppenstedtii (strain DSM 44385 / JCM 11950 / CIP 105744 / CCUG 35717)).